Consider the following 269-residue polypeptide: uncharacterized protein (269 aa).

Residues 52–262 adopt a coiled-coil conformation; it reads KNVYEQLVAT…RKILVESINK (211 aa).

This is an uncharacterized protein from Caenorhabditis elegans.